The following is a 495-amino-acid chain: Glutamyl-tRNA(Gln) amidotransferase subunit A (495 aa).

Active-site charge relay system residues include Lys-78 and Ser-159. Residue Ser-183 is the Acyl-ester intermediate of the active site.

This sequence belongs to the amidase family. GatA subfamily. As to quaternary structure, heterotrimer of A, B and C subunits.

It carries out the reaction L-glutamyl-tRNA(Gln) + L-glutamine + ATP + H2O = L-glutaminyl-tRNA(Gln) + L-glutamate + ADP + phosphate + H(+). Its function is as follows. Allows the formation of correctly charged Gln-tRNA(Gln) through the transamidation of misacylated Glu-tRNA(Gln) in organisms which lack glutaminyl-tRNA synthetase. The reaction takes place in the presence of glutamine and ATP through an activated gamma-phospho-Glu-tRNA(Gln). The polypeptide is Glutamyl-tRNA(Gln) amidotransferase subunit A (Rhizorhabdus wittichii (strain DSM 6014 / CCUG 31198 / JCM 15750 / NBRC 105917 / EY 4224 / RW1) (Sphingomonas wittichii)).